We begin with the raw amino-acid sequence, 119 residues long: Large ribosomal subunit protein bL20 (119 aa).

Belongs to the bacterial ribosomal protein bL20 family.

In terms of biological role, binds directly to 23S ribosomal RNA and is necessary for the in vitro assembly process of the 50S ribosomal subunit. It is not involved in the protein synthesizing functions of that subunit. The chain is Large ribosomal subunit protein bL20 from Alkaliphilus oremlandii (strain OhILAs) (Clostridium oremlandii (strain OhILAs)).